The primary structure comprises 55 residues: Large ribosomal subunit protein bL33 (55 aa).

It belongs to the bacterial ribosomal protein bL33 family.

This chain is Large ribosomal subunit protein bL33, found in Campylobacter fetus subsp. fetus (strain 82-40).